Consider the following 508-residue polypeptide: Photosystem II CP47 reaction center protein (508 aa).

6 helical membrane-spanning segments follow: residues 21 to 36, 101 to 115, 140 to 156, 203 to 218, 237 to 252, and 457 to 472; these read AVHIMHTALVAGWAGS, IVFSGLCFLAAIWHW, GIHLFLAGLACFGFGAF, IAAGTLGILAGLFHLS, VLSSSIAAVFFAAFVV, and SFALLFFFGHIWHGSR.

The protein belongs to the PsbB/PsbC family. PsbB subfamily. In terms of assembly, PSII is composed of 1 copy each of membrane proteins PsbA, PsbB, PsbC, PsbD, PsbE, PsbF, PsbH, PsbI, PsbJ, PsbK, PsbL, PsbM, PsbT, PsbX, PsbY, PsbZ, Psb30/Ycf12, at least 3 peripheral proteins of the oxygen-evolving complex and a large number of cofactors. It forms dimeric complexes. Binds multiple chlorophylls. PSII binds additional chlorophylls, carotenoids and specific lipids. is required as a cofactor.

It localises to the plastid. The protein localises to the chloroplast thylakoid membrane. Functionally, one of the components of the core complex of photosystem II (PSII). It binds chlorophyll and helps catalyze the primary light-induced photochemical processes of PSII. PSII is a light-driven water:plastoquinone oxidoreductase, using light energy to abstract electrons from H(2)O, generating O(2) and a proton gradient subsequently used for ATP formation. The protein is Photosystem II CP47 reaction center protein of Lotus japonicus (Lotus corniculatus var. japonicus).